A 296-amino-acid polypeptide reads, in one-letter code: MTDHLIAKVQEHVPNIPLKIISQGAEALVFETSVHPYYNYNSSEKHHESPSLHNHTTFIIKYRPTKPYRHPKIDLQINKSRTIGEVKFMYKLSKLNIACPNIISTDFNNGIIWMECLGSKLPNGTISSFKNWLWYLESQEKEDPSINLHDDDQVELVCQKVGQLIGRLHLNDMIHGDLTSSNIILTEVDTKKNEDTDANNSSVYFEPALIDFGLSSFSGLAEDKAVDLYVLERAILSTHSNYADKLNGWLLEGYQQIHDSIEFNKTKQQLGKSKLKDTIKRLEDVRLRGRKRSMLG.

The Protein kinase domain occupies 15–296 (NIPLKIISQG…LRGRKRSMLG (282 aa)). Residues 21–29 (ISQGAEALV) and Lys61 contribute to the ATP site. Catalysis depends on Asp177, which acts as the Proton acceptor.

This sequence belongs to the protein kinase superfamily. BUD32 family. In terms of assembly, component of the EKC/KEOPS complex composed of at least BUD32, CGI121, GON7, KAE1 and PCC1; the whole complex dimerizes.

The protein localises to the cytoplasm. It is found in the nucleus. The protein resides in the chromosome. It localises to the telomere. The catalysed reaction is L-seryl-[protein] + ATP = O-phospho-L-seryl-[protein] + ADP + H(+). The enzyme catalyses L-threonyl-[protein] + ATP = O-phospho-L-threonyl-[protein] + ADP + H(+). Functionally, component of the EKC/KEOPS complex that is required for the formation of a threonylcarbamoyl group on adenosine at position 37 (t(6)A37) in tRNAs that read codons beginning with adenine. The complex is probably involved in the transfer of the threonylcarbamoyl moiety of threonylcarbamoyl-AMP (TC-AMP) to the N6 group of A37. BUD32 has ATPase activity in the context of the EKC/KEOPS complex and likely plays a supporting role to the catalytic subunit KAE1. The EKC/KEOPS complex also promotes both telomere uncapping and telomere elongation. The complex is required for efficient recruitment of transcriptional coactivators. This is EKC/KEOPS complex subunit BUD32 (BUD32) from Candida albicans (strain SC5314 / ATCC MYA-2876) (Yeast).